The primary structure comprises 689 residues: MVVLRRSFHVYTRLQRGQNLTEKIVQQYSVGLAPGKRVHSGDYVSIKPAHVMSHDNSWPVALKFMNLGARTVKDPRQIVNTLDHDIQNKSDKNLTKYRNIESFAKKHGIDFYPAGRGIGHQIMVEEGYAFPLNLTVASDSHSNTYGGMGALGTPVVRTDAAAIWATGQTWWQIPPVAQVEFKGKLHESVSGKDIIVALCGVFNKDQVLNHAIEFTGDAIKHLPVDFRLTIANMTTEWGALSGLFPVDDTLINWYKNRLNIVGPNHPRINETTIKNLEDKAKVFKADSDAVYAKKLVIDLSTLTHYVSGPNSVKVSNTVQDLARDNIKINKAYLVSCTNARLSDLESAAKVVCPTGDLSKVNKVADGVEFYFAAASSEIEKEAAEKGIWQALLAAGCKPLPSGCGPCIGLGAGLLEPGEVGISATNRNFKGRMGSKDALAYLASPAVVAASAVLGRIGSPAEVWGIEDVKSSGLLAEELACNTETSTATPVSEGSAAKVEMLEGFPEEIVGELVLCDADNVNTDGIYPGKYTYQDDVSRETMAQVCMENYDGEFGSKANAGDILVSGFNFGTGSSREQAATSLLAKGINLVVAGSFSNTFSRNSINNALLTLEIPTLVEKLRSKFENAPKELTRRTGWFLKWDVPNAKVYVTEGSPDGQVLLEQKVGELGKNLQEIIIKGGLEGWVKSQL.

The N-terminal 17 residues, 1-17 (MVVLRRSFHVYTRLQRG), are a transit peptide targeting the mitochondrion. Residues Cys336, Cys403, and Cys406 each coordinate [4Fe-4S] cluster.

This sequence belongs to the aconitase/IPM isomerase family. Requires [4Fe-4S] cluster as cofactor.

It localises to the mitochondrion. The catalysed reaction is (2R,3S)-homoisocitrate = cis-homoaconitate + H2O. Its pathway is amino-acid biosynthesis; L-lysine biosynthesis via AAA pathway; L-alpha-aminoadipate from 2-oxoglutarate: step 3/5. Its function is as follows. Catalyzes the reversible hydration of cis-homoaconitate to (2R,3S)-homoisocitrate, a step in the alpha-aminoadipate pathway for lysine biosynthesis. In Candida glabrata (strain ATCC 2001 / BCRC 20586 / JCM 3761 / NBRC 0622 / NRRL Y-65 / CBS 138) (Yeast), this protein is Homoaconitase, mitochondrial (LYS4).